The sequence spans 278 residues: NADPH-dependent 7-cyano-7-deazaguanine reductase (278 aa).

87-89 (IES) provides a ligand contact to substrate. NADPH is bound at residue 89 to 90 (SK). Cysteine 185 acts as the Thioimide intermediate in catalysis. The Proton donor role is filled by aspartate 192. 224-225 (HE) lines the substrate pocket. 253–254 (RG) is an NADPH binding site. The tract at residues 255-278 (GLDINPYRSTNPTFSVQNHRSFRQ) is disordered. Polar residues predominate over residues 261-278 (YRSTNPTFSVQNHRSFRQ).

It belongs to the GTP cyclohydrolase I family. QueF type 2 subfamily. In terms of assembly, homodimer.

The protein resides in the cytoplasm. The enzyme catalyses 7-aminomethyl-7-carbaguanine + 2 NADP(+) = 7-cyano-7-deazaguanine + 2 NADPH + 3 H(+). Its pathway is tRNA modification; tRNA-queuosine biosynthesis. Its function is as follows. Catalyzes the NADPH-dependent reduction of 7-cyano-7-deazaguanine (preQ0) to 7-aminomethyl-7-deazaguanine (preQ1). The polypeptide is NADPH-dependent 7-cyano-7-deazaguanine reductase (Coxiella burnetii (strain Dugway 5J108-111)).